Consider the following 78-residue polypeptide: Conotoxin TsMEKL-P012 (78 aa).

An N-terminal signal peptide occupies residues 1 to 19; that stretch reads MEKLTILLLLAAVLVLAQA. Residues 20–38 constitute a propeptide that is removed on maturation; that stretch reads LIKKGGGEKRQKEKINFLS. 3 disulfides stabilise this stretch: C52-C66, C59-C70, and C65-C75.

It belongs to the conotoxin O2 superfamily. In terms of tissue distribution, expressed by the venom duct.

Its subcellular location is the secreted. This Conus tessulatus (Tessellate cone) protein is Conotoxin TsMEKL-P012.